Reading from the N-terminus, the 372-residue chain is Spermidine/putrescine import ATP-binding protein PotA (372 aa).

Residues 12-242 enclose the ABC transporter domain; that stretch reads IQLKGLNKSF…PTNLFVARFI (231 aa). 44–51 lines the ATP pocket; that stretch reads GPSGCGKT.

The protein belongs to the ABC transporter superfamily. Spermidine/putrescine importer (TC 3.A.1.11.1) family. In terms of assembly, the complex is composed of two ATP-binding proteins (PotA), two transmembrane proteins (PotB and PotC) and a solute-binding protein (PotD).

The protein localises to the cell inner membrane. The catalysed reaction is ATP + H2O + polyamine-[polyamine-binding protein]Side 1 = ADP + phosphate + polyamineSide 2 + [polyamine-binding protein]Side 1.. Its function is as follows. Part of the ABC transporter complex PotABCD involved in spermidine/putrescine import. Responsible for energy coupling to the transport system. The polypeptide is Spermidine/putrescine import ATP-binding protein PotA (Photobacterium profundum (strain SS9)).